A 244-amino-acid polypeptide reads, in one-letter code: MDHEIHSFIKRKLKGVGDVWFSYFMMSKNSTSQPYIISNYPEAWMKEYIKKEMFLSDPIIVASLARITPFSWDDNDIVTLRAKNQDVFISSVQHDISSGYTFVLHDHDNNVATLSIANHLEDANFEKCMKNHENDLQMLLVNVHEKVMAYQRAINDQDNPPDNSRNALLSPRETEVLFLVSSGRTYKEVSRILGISEVTVKFHINNSVRKLDVINSRHAITKALELNLFHSPCEPVVMKHMDAR.

In terms of domain architecture, HTH luxR-type spans 162–227; that stretch reads DNSRNALLSP…HAITKALELN (66 aa). A DNA-binding region (H-T-H motif) is located at residues 186–205; that stretch reads YKEVSRILGISEVTVKFHIN.

It belongs to the autoinducer-regulated transcriptional regulatory protein family.

In terms of biological role, functions as an OHLL responsive transcriptional regulator which acts in the control of the biosynthesis of carbapenem antibiotics. This chain is Transcriptional activator protein CarR (carR), found in Pectobacterium carotovorum subsp. carotovorum (Erwinia carotovora subsp. carotovora).